Consider the following 71-residue polypeptide: Beta-defensin 2 (71 aa).

The first 20 residues, 1–20, serve as a signal peptide directing secretion; that stretch reads MRTLCSLLLICCLLFSYTTP. Intrachain disulfides connect Cys37–Cys66, Cys44–Cys59, and Cys49–Cys67.

Belongs to the beta-defensin family. Kidney, uterus and to a lesser extent in heart.

The protein localises to the secreted. In terms of biological role, has bactericidal activity. The sequence is that of Beta-defensin 2 (Defb2) from Mus musculus (Mouse).